The sequence spans 229 residues: Peptidase E (229 aa).

Catalysis depends on charge relay system residues Ser120, Asp135, and His157.

Belongs to the peptidase S51 family.

It is found in the cytoplasm. It carries out the reaction Dipeptidase E catalyzes the hydrolysis of dipeptides Asp-|-Xaa. It does not act on peptides with N-terminal Glu, Asn or Gln, nor does it cleave isoaspartyl peptides.. Its function is as follows. Hydrolyzes dipeptides containing N-terminal aspartate residues. May play a role in allowing the cell to use peptide aspartate to spare carbon otherwise required for the synthesis of the aspartate family of amino acids. This Salmonella typhimurium (strain LT2 / SGSC1412 / ATCC 700720) protein is Peptidase E (pepE).